A 304-amino-acid polypeptide reads, in one-letter code: E3 ubiquitin-protein ligase CHIP (304 aa).

Residues 1–10 show a composition bias toward basic and acidic residues; it reads MKGKEEKEGG. The segment at 1 to 30 is disordered; it reads MKGKEEKEGGARLGTGGGGSPDKSPSAQEL. A Glycyl lysine isopeptide (Lys-Gly) (interchain with G-Cter in ubiquitin) cross-link involves residue Lys-2. A compositionally biased stretch (gly residues) spans 11–20; sequence ARLGTGGGGS. Position 20 is a phosphoserine (Ser-20). Lys-23 participates in a covalent cross-link: Glycyl lysine isopeptide (Lys-Gly) (interchain with G-Cter in ubiquitin). Phosphoserine occurs at positions 24 and 26. 3 TPR repeats span residues 27–60, 61–94, and 96–128; these read AQELKEQGNRLFVGRKYPEAAACYGRAITRNPLV, AVYYTNRALCYLKMQQPEQALADCRRALELDGQS, and KAHFFLGQCQLEMESYDEAIANLQRAYSLAKEQ. The segment at 102–201 is required for interaction with MAPK7; the sequence is GQCQLEMESY…GHIRAQQACI (100 aa). Residues 143 to 197 are required for interaction with and ubiquitination of MYOCD; sequence AKKKRWNSIEERRIHQESELHSYLTRLIAAERERELEECQRNHEGDEDDGHIRAQ. The interval 144-198 is required for interaction with FOXO1; that stretch reads KKKRWNSIEERRIHQESELHSYLTRLIAAERERELEECQRNHEGDEDDGHIRAQQ. The tract at residues 144–304 is required for ubiquitination of FOXO1; the sequence is KKKRWNSIEE…ISENGWVEDY (161 aa). Ser-150 carries the post-translational modification Phosphoserine. Glycyl lysine isopeptide (Lys-Gly) (interchain with G-Cter in ubiquitin) cross-links involve residues Lys-222 and Lys-256. The 75-residue stretch at 227–301 folds into the U-box domain; the sequence is DIPDYLCGKI…DAFISENGWV (75 aa). Ser-274 bears the Phosphoserine mark.

In terms of assembly, homodimer. Interacts with BAG2, and with the E2 ubiquitin conjugating enzymes UBE2D1, UBE2D2 and UBE2D3. Detected in a ternary complex containing STUB1, HSPA1A and HSPBP1. Part of a complex composed of STUB1/CHIP, VCP/p97, CHRNA3, and UBXN2A that modulates the ubiquitination and endoplasmic reticulum-associated degradation (ERAD) of CHRNA3. Within the complex UBXN2A acts as a scaffold protein required for the interaction of CHRNA3 with VCP/p97, this interaction also inhibits CHRNA3 ubiquitination by STUB1/CHIP and subsequently ERAD. Interacts with MKKS. Interacts with DNAAF4. Interacts (via the U-box domain) with the UBE2V2-UBE2N heterodimer; the complex has a specific 'Lys-63'-linked polyubiquitination activity. Interacts (when monoubiquitinated) with ATXN3. Interacts with UBE2W. Interacts with DNAJB6. Interacts with FLCN and HSP90AA1. Interacts with HSP90. Interacts with UBE2N and UBE2V1. Interacts (via TPR repeats) with HSPA8 (via C-terminus). Interacts (via TPR repeats) with HSPA1A (via C-terminus). Interacts with the non-acetylated form of HSPA1A and HSPA1B. Interacts with SMAD3 and HSP90AB1. Interacts with UBE4B. Interacts with PRMT5. Interacts with MYOCD (via C-terminus). Interacts with FOXO1 (when phosphorylated on 'Ser-250'). Interacts with MAPK7/ERK5; the interaction is enhanced in the presence of IGF1 or MAP2K5 and promotes STUB1/CHIP E3 ligase activity. Interacts with and ubiquitinates ESR1; the interaction is promoted in the absence of estradiol (17-beta-estradiol/E2). Interacts with ESR2. Interacts with and ubiquitinates NFATC3; HSPA1A/HSP70 is required as a co-chaperone. In macrophages, interacts with PAQR3; the interaction promotes PPARG poylubiquitination and STUB1-mediated degradation. Component of the chaperone-assisted selective autophagy (CASA) complex consisting of BAG3, HSPA8/HSC70, HSPB8 and STUB1/CHIP. In terms of processing, auto-ubiquitinated; mediated by UBE2D1 and UBE2D2 and enhanced in the presence of MAP2K5. Monoubiquitinated at Lys-2 following cell stress by UBE2W, promoting the interaction with ATXN3. Expressed in the adventitia layer of the carotid artery (at protein level). Expressed in the CA1 region of the hippocampus (at protein level). Expressed in the uterus (at protein level).

It localises to the cytoplasm. It is found in the nucleus. Its subcellular location is the mitochondrion. It catalyses the reaction S-ubiquitinyl-[E2 ubiquitin-conjugating enzyme]-L-cysteine + [acceptor protein]-L-lysine = [E2 ubiquitin-conjugating enzyme]-L-cysteine + N(6)-ubiquitinyl-[acceptor protein]-L-lysine.. It functions in the pathway protein modification; protein ubiquitination. In terms of biological role, E3 ubiquitin-protein ligase which targets misfolded chaperone substrates towards proteasomal degradation. Plays a role in the maintenance of mitochondrial morphology and promotes mitophagic removal of dysfunctional mitochondria; thereby acts as a protector against apoptosis in response to cellular stress. Negatively regulates vascular smooth muscle contraction, via degradation of the transcriptional activator MYOCD and subsequent loss of transcription of genes involved in vascular smooth muscle contraction. Promotes survival and proliferation of cardiac smooth muscle cells via ubiquitination and degradation of FOXO1, resulting in subsequent repression of FOXO1-mediated transcription of pro-apoptotic genes. Ubiquitinates ICER-type isoforms of CREM and targets them for proteasomal degradation, thereby acts as a positive effector of MAPK/ERK-mediated inhibition of apoptosis in cardiomyocytes. Inhibits lipopolysaccharide-induced apoptosis and hypertrophy in cardiomyocytes, via ubiquitination and subsequent proteasomal degradation of NFATC3. Collaborates with ATXN3 in the degradation of misfolded chaperone substrates: ATXN3 restricting the length of ubiquitin chain attached to STUB1/CHIP substrates and preventing further chain extension. Ubiquitinates NOS1 in concert with Hsp70 and Hsp40. Modulates the activity of several chaperone complexes, including Hsp70, Hsc70 and Hsp90. Ubiquitinates CHRNA3 targeting it for endoplasmic reticulum-associated degradation in cortical neurons, as part of the STUB1-VCP-UBXN2A complex. Ubiquitinates and promotes ESR1 proteasomal degradation in response to age-related circulating estradiol (17-beta-estradiol/E2) decline, thereby promotes neuronal apoptosis in response to ischemic reperfusion injury. Mediates transfer of non-canonical short ubiquitin chains to HSPA8 that have no effect on HSPA8 degradation. Mediates polyubiquitination of DNA polymerase beta (POLB) at 'Lys-41', 'Lys-61' and 'Lys-81', thereby playing a role in base-excision repair: catalyzes polyubiquitination by amplifying the HUWE1/ARF-BP1-dependent monoubiquitination and leading to POLB-degradation by the proteasome. Mediates polyubiquitination of CYP3A4. Ubiquitinates EPHA2 and may regulate the receptor stability and activity through proteasomal degradation. Acts as a co-chaperone for HSPA1A and HSPA1B chaperone proteins and promotes ubiquitin-mediated protein degradation. Negatively regulates the suppressive function of regulatory T-cells (Treg) during inflammation by mediating the ubiquitination and degradation of FOXP3 in a HSPA1A/B-dependent manner. Catalyzes monoubiquitination of SIRT6, preventing its degradation by the proteasome. Likely mediates polyubiquitination and down-regulates plasma membrane expression of PD-L1/CD274, an immune inhibitory ligand critical for immune tolerance to self and antitumor immunity. Negatively regulates TGF-beta signaling by modulating the basal level of SMAD3 via ubiquitin-mediated degradation. Plays a role in the degradation of TP53. Mediates ubiquitination of RIPK3 leading to its subsequent proteasome-dependent degradation. May regulate myosin assembly in striated muscles together with UBE4B and VCP/p97 by targeting myosin chaperone UNC45B for proteasomal degradation. Ubiquitinates PPARG in macrophages playing a role in M2 macrophages polarization and angiogenesis. The sequence is that of E3 ubiquitin-protein ligase CHIP from Rattus norvegicus (Rat).